The sequence spans 274 residues: 3-methyl-2-oxobutanoate hydroxymethyltransferase (274 aa).

Mg(2+) is bound by residues Asp-49 and Asp-88. 3-methyl-2-oxobutanoate contacts are provided by residues Asp-49–Ser-50, Asp-88, and Lys-118. Glu-120 lines the Mg(2+) pocket. Glu-187 serves as the catalytic Proton acceptor.

Belongs to the PanB family. Homodecamer; pentamer of dimers. It depends on Mg(2+) as a cofactor.

Its subcellular location is the cytoplasm. It catalyses the reaction 3-methyl-2-oxobutanoate + (6R)-5,10-methylene-5,6,7,8-tetrahydrofolate + H2O = 2-dehydropantoate + (6S)-5,6,7,8-tetrahydrofolate. It functions in the pathway cofactor biosynthesis; (R)-pantothenate biosynthesis; (R)-pantoate from 3-methyl-2-oxobutanoate: step 1/2. Functionally, catalyzes the reversible reaction in which hydroxymethyl group from 5,10-methylenetetrahydrofolate is transferred onto alpha-ketoisovalerate to form ketopantoate. This is 3-methyl-2-oxobutanoate hydroxymethyltransferase from Rhodopseudomonas palustris (strain BisB5).